The chain runs to 70 residues: Putative membrane protein insertion efficiency factor (70 aa).

Belongs to the UPF0161 family.

It localises to the cell membrane. Its function is as follows. Could be involved in insertion of integral membrane proteins into the membrane. This Finegoldia magna (strain ATCC 29328 / DSM 20472 / WAL 2508) (Peptostreptococcus magnus) protein is Putative membrane protein insertion efficiency factor.